We begin with the raw amino-acid sequence, 230 residues long: Ribonuclease 1 (230 aa).

An N-terminal signal peptide occupies residues 1–22; it reads MKILLASLCLISLLVILPSVFS. Q38 contributes to the RNA binding site. C44 and C50 form a disulfide bridge. Residues H65, F115, 118–119, and 122–123 each bind RNA; these read HE and KH. The Proton donor role is filled by H65. Disulfide bonds link C80–C126, C186–C221, and C202–C213. E119 is an active-site residue. H123 serves as the catalytic Proton acceptor.

This sequence belongs to the RNase T2 family.

The catalysed reaction is a ribonucleotidyl-ribonucleotide-RNA + H2O = a 3'-end 3'-phospho-ribonucleotide-RNA + a 5'-end dephospho-ribonucleoside-RNA + H(+). May remobilize phosphate, particularly when cells senesce or when phosphate becomes limiting. This Arabidopsis thaliana (Mouse-ear cress) protein is Ribonuclease 1 (RNS1).